Reading from the N-terminus, the 977-residue chain is RNA-binding protein 15 (977 aa).

Composition is skewed to basic and acidic residues over residues 1–10 (MRTAGRDPVP), 35–52 (RGDDLRRPATMKGKERSP), 59–72 (RGGEDSTSRGERSK), and 98–113 (LHLDKSSSRGGSREYD). The segment at 1 to 167 (MRTAGRDPVP…SSAPGGGDGA (167 aa)) is disordered. The residue at position 109 (S109) is a Phosphoserine. Residues 119 to 130 (SSSRLHSYSSPS) show a composition bias toward low complexity. A compositionally biased stretch (gly residues) spans 135–150 (SGGGESRSSSRGGGGE). Over residues 151-160 (SRSSGAASSA) the composition is skewed to low complexity. The RRM 1 domain occupies 170 to 252 (KTLKISELGS…RPLKIEAVYV (83 aa)). A phosphoserine mark is found at S179, S208, and S210. K246 participates in a covalent cross-link: Glycyl lysine isopeptide (Lys-Gly) (interchain with G-Cter in SUMO2). S253, S257, and S259 each carry phosphoserine. Residues 256 to 298 (RSRSPLDKDTYPPSASVVGASVGGHRHPPGGGGGQRSLSPGGA) are disordered. Residue Y266 is modified to Phosphotyrosine. A phosphoserine mark is found at S292, S294, and S365. RRM domains are found at residues 374–451 (RTLF…YGKA) and 455–529 (TRLW…FADT). Residues K406, K420, and K445 each participate in a glycyl lysine isopeptide (Lys-Gly) (interchain with G-Cter in SUMO2) cross-link. Residue K450 is modified to N6-acetyllysine. Composition is skewed to basic and acidic residues over residues 555–581 (HRAPDPLRGARDRTPPLLYRDRDRDLY) and 613–661 (SLDR…ESDR). The segment at 555–778 (HRAPDPLRGA…KQDGGTAPVA (224 aa)) is disordered. A Phosphothreonine modification is found at T568. R578 bears the Asymmetric dimethylarginine; alternate; by PRMT1 mark. R578 is subject to Omega-N-methylarginine; alternate; by PRMT1. S622, S656, S670, S674, S700, and S741 each carry phosphoserine. Basic and acidic residues-rich tracts occupy residues 673–728 (RSPE…AERD) and 741–750 (SPLKKEDRSD). K744 is covalently cross-linked (Glycyl lysine isopeptide (Lys-Gly) (interchain with G-Cter in SUMO2)). Residues 752 to 771 (SAPSTSTASSKLKSPSQKQD) are compositionally biased toward polar residues. 3 positions are modified to phosphoserine: S765, S767, and S781. An SPOC domain is found at 777–956 (VASASPKLCL…YLVMIIVRGF (180 aa)). The tract at residues 865–884 (GSSDSRSSSSSAASDTATST) is disordered. The span at 866-884 (SSDSRSSSSSAASDTATST) shows a compositional bias: low complexity. The residue at position 935 (S935) is a Phosphoserine.

This sequence belongs to the RRM Spen family. In terms of assembly, component of the WMM complex, a N6-methyltransferase complex composed of a catalytic subcomplex, named MAC, and of an associated subcomplex, named MACOM. The MAC subcomplex is composed of METTL3 and METTL14. The MACOM subcomplex is composed of WTAP, ZC3H13, CBLL1/HAKAI, VIRMA, and, in some cases of RBM15 (RBM15 or RBM15B). Also a component of a MACOM-like complex, named WTAP complex, composed of WTAP, ZC3H13, CBLL1, VIRMA, RBM15, BCLAF1 and THRAP3. Interacts with RBPJ. Interacts (via SPOC domain) with SETD1B. Interacts with NXF1, the interaction is required to promote mRNA export. Interacts with SF3B1. As to quaternary structure, (Microbial infection) Interacts with Epstein-Barr virus BSFL2/BMLF1. Post-translationally, methylated at Arg-578 by PRMT1, leading to promote ubiquitination by CNOT4 and subsequent degradation by the proteasome. Ubiquitinated by CNOT4 following methylation at Arg-578 by PRMT1.

Its subcellular location is the nucleus speckle. It is found in the nucleus. The protein resides in the nucleoplasm. The protein localises to the nucleus envelope. It localises to the nucleus membrane. RNA-binding protein that acts as a key regulator of N6-methyladenosine (m6A) methylation of RNAs, thereby regulating different processes, such as hematopoietic cell homeostasis, alternative splicing of mRNAs and X chromosome inactivation mediated by Xist RNA. Associated component of the WMM complex, a complex that mediates N6-methyladenosine (m6A) methylation of RNAs, a modification that plays a role in the efficiency of mRNA splicing and RNA processing. Plays a key role in m6A methylation, possibly by binding target RNAs and recruiting the WMM complex. Involved in random X inactivation mediated by Xist RNA: acts by binding Xist RNA and recruiting the WMM complex, which mediates m6A methylation, leading to target YTHDC1 reader on Xist RNA and promoting transcription repression activity of Xist. Required for the development of multiple tissues, such as the maintenance of the homeostasis of long-term hematopoietic stem cells and for megakaryocyte (MK) and B-cell differentiation. Regulates megakaryocyte differentiation by regulating alternative splicing of genes important for megakaryocyte differentiation; probably regulates alternative splicing via m6A regulation. Required for placental vascular branching morphogenesis and embryonic development of the heart and spleen. Acts as a regulator of thrombopoietin response in hematopoietic stem cells by regulating alternative splicing of MPL. May also function as an mRNA export factor, stimulating export and expression of RTE-containing mRNAs which are present in many retrotransposons that require to be exported prior to splicing. High affinity binding of pre-mRNA to RBM15 may allow targeting of the mRNP to the export helicase DBP5 in a manner that is independent of splicing-mediated NXF1 deposition, resulting in export prior to splicing. May be implicated in HOX gene regulation. The protein is RNA-binding protein 15 of Homo sapiens (Human).